Reading from the N-terminus, the 289-residue chain is Acetyl-coenzyme A carboxylase carboxyl transferase subunit beta (289 aa).

The region spanning 28-289 (VMTKCPKCKK…QGGEMAVWQS (262 aa)) is the CoA carboxyltransferase N-terminal domain. Zn(2+) is bound by residues C32, C35, C51, and C54. The C4-type zinc-finger motif lies at 32–54 (CPKCKKIMYTKEVLKNLKVCVNC).

This sequence belongs to the AccD/PCCB family. Acetyl-CoA carboxylase is a heterohexamer composed of biotin carboxyl carrier protein (AccB), biotin carboxylase (AccC) and two subunits each of ACCase subunit alpha (AccA) and ACCase subunit beta (AccD). The cofactor is Zn(2+).

It is found in the cytoplasm. The enzyme catalyses N(6)-carboxybiotinyl-L-lysyl-[protein] + acetyl-CoA = N(6)-biotinyl-L-lysyl-[protein] + malonyl-CoA. Its pathway is lipid metabolism; malonyl-CoA biosynthesis; malonyl-CoA from acetyl-CoA: step 1/1. Functionally, component of the acetyl coenzyme A carboxylase (ACC) complex. Biotin carboxylase (BC) catalyzes the carboxylation of biotin on its carrier protein (BCCP) and then the CO(2) group is transferred by the transcarboxylase to acetyl-CoA to form malonyl-CoA. This chain is Acetyl-coenzyme A carboxylase carboxyl transferase subunit beta, found in Bacillus thuringiensis (strain Al Hakam).